The primary structure comprises 482 residues: UDP-N-acetylmuramoyl-L-alanyl-D-glutamate--2,6-diaminopimelate ligase 1 (482 aa).

Serine 30 contributes to the UDP-N-acetyl-alpha-D-muramoyl-L-alanyl-D-glutamate binding site. An ATP-binding site is contributed by 110-116 (GTNGKTT). Residues 152–153 (TT), serine 179, and arginine 187 contribute to the UDP-N-acetyl-alpha-D-muramoyl-L-alanyl-D-glutamate site. Lysine 219 carries the post-translational modification N6-carboxylysine. Meso-2,6-diaminopimelate-binding positions include arginine 378, 402-405 (DNPR), glycine 452, and glutamate 456. Residues 402–405 (DNPR) carry the Meso-diaminopimelate recognition motif motif.

This sequence belongs to the MurCDEF family. MurE subfamily. Mg(2+) is required as a cofactor. In terms of processing, carboxylation is probably crucial for Mg(2+) binding and, consequently, for the gamma-phosphate positioning of ATP.

It localises to the cytoplasm. It catalyses the reaction UDP-N-acetyl-alpha-D-muramoyl-L-alanyl-D-glutamate + meso-2,6-diaminopimelate + ATP = UDP-N-acetyl-alpha-D-muramoyl-L-alanyl-gamma-D-glutamyl-meso-2,6-diaminopimelate + ADP + phosphate + H(+). The protein operates within cell wall biogenesis; peptidoglycan biosynthesis. Its function is as follows. Catalyzes the addition of meso-diaminopimelic acid to the nucleotide precursor UDP-N-acetylmuramoyl-L-alanyl-D-glutamate (UMAG) in the biosynthesis of bacterial cell-wall peptidoglycan. The protein is UDP-N-acetylmuramoyl-L-alanyl-D-glutamate--2,6-diaminopimelate ligase 1 of Clostridium acetobutylicum (strain ATCC 824 / DSM 792 / JCM 1419 / IAM 19013 / LMG 5710 / NBRC 13948 / NRRL B-527 / VKM B-1787 / 2291 / W).